We begin with the raw amino-acid sequence, 81 residues long: Large ribosomal subunit protein bL31B (81 aa).

The protein belongs to the bacterial ribosomal protein bL31 family. Type B subfamily. In terms of assembly, part of the 50S ribosomal subunit.

The chain is Large ribosomal subunit protein bL31B from Lactobacillus acidophilus (strain ATCC 700396 / NCK56 / N2 / NCFM).